A 70-amino-acid chain; its full sequence is MPACALNKKPAIGISEKKFEKALIEYMQNANFKREPKIPQEKQQDYDKLHQKIISIEKQRRNTKKPGPWS.

This is an uncharacterized protein from Bacillus phage phi105 (Bacteriophage phi-105).